Here is a 413-residue protein sequence, read N- to C-terminus: Envelope glycoprotein M (413 aa).

Residues 1–19 are Intravirion-facing; it reads MGNYYYGGQESRLERISWR. Residues 20 to 40 form a helical membrane-spanning segment; it reads MWMVEAACYIVLVLLTLVSSF. At 41-88 the chain is on the virion surface side; that stretch reads ASLSSTTGFPCFVGTVGESSFGGDLMGHGMTPARRDGVKIFFMSSPST. A helical transmembrane segment spans residues 89-109; that stretch reads LFVVFSAVFVWLVVAVYLLLG. Over 110 to 133 the chain is Intravirion; sequence GVRVKMCNFDSSYGASELSSAVAT. The chain crosses the membrane as a helical span at residues 134–154; the sequence is MTSLVTLSITAWAWQVFVLML. Residues 155 to 160 are Virion surface-facing; sequence SYRQLT. The helical transmembrane segment at 161–181 threads the bilayer; it reads LAAVAFVGIFIAGLVFMLSFA. Residues 182–218 lie on the Intravirion side of the membrane; sequence SGGKSPENYATFNSQLKTVCKDVHAVITAFKAVVLNL. The helical transmembrane segment at 219 to 239 threads the bilayer; that stretch reads FCVVFGVWHLMLVMLGAVIMV. Topologically, residues 240-251 are virion surface; that stretch reads LNFGVSIPKATT. Residues 252–272 traverse the membrane as a helical segment; that stretch reads GALVVFIVLGLVYLMMIELVV. The Intravirion segment spans residues 273-277; the sequence is SRYVH. The chain crosses the membrane as a helical span at residues 278 to 298; sequence VLLGPHLGMIIALGIAGTSAL. The Virion surface segment spans residues 299–312; it reads SYAETLDEIMYASW. The helical transmembrane segment at 313 to 333 threads the bilayer; that stretch reads KPVAAGILGAFSVIVLALAVL. The Intravirion portion of the chain corresponds to 334 to 413; it reads RAVRSYKFHK…EDVIYENMKY (80 aa).

Belongs to the herpesviridae glycoprotein M family. Interacts (via N-terminus) with gN (via N-terminus). The gM-gN heterodimer forms the gCII complex.

It localises to the virion membrane. Its subcellular location is the host Golgi apparatus. It is found in the host trans-Golgi network. The protein localises to the host endosome membrane. The protein resides in the host nucleus inner membrane. Its function is as follows. Envelope glycoprotein important for virion assembly and egress. Plays a role in the correct incorporation of gH-gL into virion membrane. Directs the glycoprotein N (gN) to the host trans-Golgi network. This Psittacid herpesvirus 1 (isolate Amazon parrot/-/97-0001/1997) (PsHV-1) protein is Envelope glycoprotein M.